Here is a 348-residue protein sequence, read N- to C-terminus: uncharacterized protein (348 aa).

This is an uncharacterized protein from Geobacillus kaustophilus (strain HTA426).